A 109-amino-acid chain; its full sequence is Large ribosomal subunit protein uL22 (109 aa).

This sequence belongs to the universal ribosomal protein uL22 family. As to quaternary structure, part of the 50S ribosomal subunit.

Functionally, this protein binds specifically to 23S rRNA; its binding is stimulated by other ribosomal proteins, e.g. L4, L17, and L20. It is important during the early stages of 50S assembly. It makes multiple contacts with different domains of the 23S rRNA in the assembled 50S subunit and ribosome. The globular domain of the protein is located near the polypeptide exit tunnel on the outside of the subunit, while an extended beta-hairpin is found that lines the wall of the exit tunnel in the center of the 70S ribosome. This is Large ribosomal subunit protein uL22 from Cupriavidus metallidurans (strain ATCC 43123 / DSM 2839 / NBRC 102507 / CH34) (Ralstonia metallidurans).